Reading from the N-terminus, the 85-residue chain is Small ribosomal subunit protein uS17 (85 aa).

It belongs to the universal ribosomal protein uS17 family. In terms of assembly, part of the 30S ribosomal subunit.

One of the primary rRNA binding proteins, it binds specifically to the 5'-end of 16S ribosomal RNA. The polypeptide is Small ribosomal subunit protein uS17 (Citrifermentans bemidjiense (strain ATCC BAA-1014 / DSM 16622 / JCM 12645 / Bem) (Geobacter bemidjiensis)).